Reading from the N-terminus, the 93-residue chain is Putative septation protein SpoVG (93 aa).

The protein belongs to the SpoVG family.

In terms of biological role, could be involved in septation. The sequence is that of Putative septation protein SpoVG from Lachnoclostridium phytofermentans (strain ATCC 700394 / DSM 18823 / ISDg) (Clostridium phytofermentans).